We begin with the raw amino-acid sequence, 340 residues long: Methionine import ATP-binding protein MetN 2 (340 aa).

In terms of domain architecture, ABC transporter spans 5 to 244 (VRFESVTKTF…PQAPASKSFV (240 aa)). Position 41–48 (41–48 (GYSGAGKS)) interacts with ATP.

It belongs to the ABC transporter superfamily. Methionine importer (TC 3.A.1.24) family. As to quaternary structure, the complex is composed of two ATP-binding proteins (MetN), two transmembrane proteins (MetI) and a solute-binding protein (MetQ).

Its subcellular location is the cell membrane. The enzyme catalyses L-methionine(out) + ATP + H2O = L-methionine(in) + ADP + phosphate + H(+). It carries out the reaction D-methionine(out) + ATP + H2O = D-methionine(in) + ADP + phosphate + H(+). In terms of biological role, part of the ABC transporter complex MetNIQ involved in methionine import. Responsible for energy coupling to the transport system. This is Methionine import ATP-binding protein MetN 2 from Rhodococcus jostii (strain RHA1).